Reading from the N-terminus, the 266-residue chain is Thymidylate synthase (266 aa).

Residues R20 and 129-130 (RR) each bind dUMP. Residue C149 is the Nucleophile of the active site. DUMP contacts are provided by residues 169 to 172 (RSCD), N180, and 210 to 212 (HVY). (6R)-5,10-methylene-5,6,7,8-tetrahydrofolate is bound at residue D172. A265 provides a ligand contact to (6R)-5,10-methylene-5,6,7,8-tetrahydrofolate.

It belongs to the thymidylate synthase family. Bacterial-type ThyA subfamily. Homodimer.

The protein resides in the cytoplasm. The enzyme catalyses dUMP + (6R)-5,10-methylene-5,6,7,8-tetrahydrofolate = 7,8-dihydrofolate + dTMP. It functions in the pathway pyrimidine metabolism; dTTP biosynthesis. Its function is as follows. Catalyzes the reductive methylation of 2'-deoxyuridine-5'-monophosphate (dUMP) to 2'-deoxythymidine-5'-monophosphate (dTMP) while utilizing 5,10-methylenetetrahydrofolate (mTHF) as the methyl donor and reductant in the reaction, yielding dihydrofolate (DHF) as a by-product. This enzymatic reaction provides an intracellular de novo source of dTMP, an essential precursor for DNA biosynthesis. The polypeptide is Thymidylate synthase (Bifidobacterium longum (strain NCC 2705)).